The sequence spans 415 residues: MFNRNLTLDQVDPDVWAAIQKEDVRQEQHIELIASENYASPAVMQAQGTQLTNKYAEGYPGKRYYGGCEYVDVVEQLAIDRLKQIFGAEAANVQPNSGSQANQGVYMAVLKPGDTVLGMSLAEGGHLTHGASVNASGKLYNFVPYGLDADEVLDYAQVERLTKEHKPKLIVAGASAYALHIDFERMARIAHDNGALFMVDIAHYAGLVAGGAYPNPVPHADFVTSTTHKSLRGPRGGVIMMKAEVEKAVNSAIFPGIQGGPLMHVIAAKAVAFKEALSPEFQDYAQQVVKNAKVLADTLVKRGLRIVSGRTESHVMLVDLRPKGITGKEAEAVLGQAHITVNKNAIPNDPEKPFVTSGIRLGTPAMTTRGFKEAEAELTANLIADVLDNPRDEANIAAVRARVNELTARLPVYGN.

(6S)-5,6,7,8-tetrahydrofolate contacts are provided by residues Leu-121 and 125-127 (GHL). Position 229 is an N6-(pyridoxal phosphate)lysine (Lys-229).

It belongs to the SHMT family. As to quaternary structure, homodimer. Pyridoxal 5'-phosphate is required as a cofactor.

It localises to the cytoplasm. The enzyme catalyses (6R)-5,10-methylene-5,6,7,8-tetrahydrofolate + glycine + H2O = (6S)-5,6,7,8-tetrahydrofolate + L-serine. It functions in the pathway one-carbon metabolism; tetrahydrofolate interconversion. Its pathway is amino-acid biosynthesis; glycine biosynthesis; glycine from L-serine: step 1/1. Functionally, catalyzes the reversible interconversion of serine and glycine with tetrahydrofolate (THF) serving as the one-carbon carrier. This reaction serves as the major source of one-carbon groups required for the biosynthesis of purines, thymidylate, methionine, and other important biomolecules. Also exhibits THF-independent aldolase activity toward beta-hydroxyamino acids, producing glycine and aldehydes, via a retro-aldol mechanism. This Bordetella parapertussis (strain 12822 / ATCC BAA-587 / NCTC 13253) protein is Serine hydroxymethyltransferase 2.